The primary structure comprises 337 residues: Glyceraldehyde-3-phosphate dehydrogenase (337 aa).

NAD(+)-binding positions include R12 to I13, D34, and K79. Residues S150 to T152, T181, T210 to G211, and R233 contribute to the D-glyceraldehyde 3-phosphate site. C151 serves as the catalytic Nucleophile. N315 is an NAD(+) binding site.

It belongs to the glyceraldehyde-3-phosphate dehydrogenase family. Homotetramer. Expressed in all tissues examined.

Its subcellular location is the cytoplasm. The catalysed reaction is D-glyceraldehyde 3-phosphate + phosphate + NAD(+) = (2R)-3-phospho-glyceroyl phosphate + NADH + H(+). Its pathway is carbohydrate degradation; glycolysis; pyruvate from D-glyceraldehyde 3-phosphate: step 1/5. In Lentinula edodes (Shiitake mushroom), this protein is Glyceraldehyde-3-phosphate dehydrogenase (gpd).